The sequence spans 337 residues: Glyceraldehyde-3-phosphate dehydrogenase 2 (337 aa).

Residues 11–12, aspartate 35, arginine 80, and threonine 122 contribute to the NADP(+) site; that span reads RI. D-glyceraldehyde 3-phosphate-binding positions include 153-155, threonine 184, arginine 199, 212-213, and arginine 235; these read SCT and TG. Residue cysteine 154 is the Nucleophile of the active site. Asparagine 317 lines the NADP(+) pocket.

This sequence belongs to the glyceraldehyde-3-phosphate dehydrogenase family. As to quaternary structure, homotetramer.

It localises to the cytoplasm. It catalyses the reaction D-glyceraldehyde 3-phosphate + phosphate + NADP(+) = (2R)-3-phospho-glyceroyl phosphate + NADPH + H(+). It carries out the reaction D-glyceraldehyde 3-phosphate + phosphate + NAD(+) = (2R)-3-phospho-glyceroyl phosphate + NADH + H(+). It functions in the pathway carbohydrate biosynthesis; Calvin cycle. Its function is as follows. Gap2 has a major role in carbon fixation as a component of the Calvin cycle. Catalyzes the oxidative phosphorylation of glyceraldehyde 3-phosphate (G3P) to 1,3-bisphosphoglycerate (BPG) using the cofactor NAD. The first reaction step involves the formation of a hemiacetal intermediate between G3P and a cysteine residue, and this hemiacetal intermediate is then oxidized to a thioester, with concomitant reduction of NAD to NADH. The reduced NADH is then exchanged with the second NAD, and the thioester is attacked by a nucleophilic inorganic phosphate to produce BPG. The protein is Glyceraldehyde-3-phosphate dehydrogenase 2 (gap2) of Trichormus variabilis (strain ATCC 29413 / PCC 7937) (Anabaena variabilis).